The chain runs to 335 residues: MRFNEQADGVIILDQTLLPGKEAYLTLTTAEEIWDAIYKLKVRGAPAIGVAAAYGIYVCARRIDTAEKSVFVNEFRKIKEYLAGSRPTAVNLVAALNRMERVLVAHPTLSVPEWKELLYKEAIAIREEDAAACRQIGENCLELLRPGMGILTHCNAGHLAVSEYGTALAPIYLGQERGYGFKVFADETRPLLQGARLTAYELSRAGVDVTLICDNMASVVMRKGWVHAVVVGCDRVAANGDVANKIGTSGVAILARHYKIPFYVLGPTSTIDGSCPDGDSIVIEERNPDEVTEMWYSRRMAPKDVKVYNPAFDITPHELITAIITEKGIFYKNNR.

Substrate is bound by residues 43–45 (RGA), Arg-86, and Gln-193. Asp-234 functions as the Proton donor in the catalytic mechanism. 244–245 (NK) lines the substrate pocket.

It belongs to the eIF-2B alpha/beta/delta subunits family. MtnA subfamily.

It carries out the reaction 5-(methylsulfanyl)-alpha-D-ribose 1-phosphate = 5-(methylsulfanyl)-D-ribulose 1-phosphate. Its pathway is amino-acid biosynthesis; L-methionine biosynthesis via salvage pathway; L-methionine from S-methyl-5-thio-alpha-D-ribose 1-phosphate: step 1/6. Functionally, catalyzes the interconversion of methylthioribose-1-phosphate (MTR-1-P) into methylthioribulose-1-phosphate (MTRu-1-P). The protein is Methylthioribose-1-phosphate isomerase of Parabacteroides distasonis (strain ATCC 8503 / DSM 20701 / CIP 104284 / JCM 5825 / NCTC 11152).